The chain runs to 457 residues: Putative purine-cytosine permease YxlA (457 aa).

Helical transmembrane passes span 24 to 44 (FPVW…TIPV), 50 to 70 (LFWS…FMAS), 90 to 110 (FGVI…LGFF), 127 to 147 (IPGS…TIFG), 164 to 184 (AVFF…GSWI), 192 to 212 (IFLV…PYVA), 228 to 248 (FWYS…LGAL), 264 to 284 (IVQL…FGQM), 316 to 336 (IIMI…GQSN), 341 to 361 (FLNF…INLV), 392 to 412 (IAFV…FYIG), and 420 to 440 (GGDI…YVLM).

It belongs to the purine-cytosine permease (2.A.39) family.

Its subcellular location is the cell membrane. This is Putative purine-cytosine permease YxlA (yxlA) from Bacillus subtilis (strain 168).